The sequence spans 115 residues: Large ribosomal subunit protein bL20 (115 aa).

This sequence belongs to the bacterial ribosomal protein bL20 family.

Its function is as follows. Binds directly to 23S ribosomal RNA and is necessary for the in vitro assembly process of the 50S ribosomal subunit. It is not involved in the protein synthesizing functions of that subunit. In Chlorobium luteolum (strain DSM 273 / BCRC 81028 / 2530) (Pelodictyon luteolum), this protein is Large ribosomal subunit protein bL20.